The following is a 679-amino-acid chain: Methionine--tRNA ligase (679 aa).

Residues 14-24 carry the 'HIGH' region motif; that stretch reads PYANGSIHLGH. Positions 145, 148, 158, and 161 each coordinate Zn(2+). Residues 331-335 carry the 'KMSKS' region motif; that stretch reads KMSKS. Residue lysine 334 participates in ATP binding. In terms of domain architecture, tRNA-binding spans 577 to 679; the sequence is TFAAVDLRVA…SGAKPGQRIK (103 aa).

Belongs to the class-I aminoacyl-tRNA synthetase family. MetG type 1 subfamily. Homodimer. Requires Zn(2+) as cofactor.

It is found in the cytoplasm. It catalyses the reaction tRNA(Met) + L-methionine + ATP = L-methionyl-tRNA(Met) + AMP + diphosphate. In terms of biological role, is required not only for elongation of protein synthesis but also for the initiation of all mRNA translation through initiator tRNA(fMet) aminoacylation. In Pseudomonas putida (strain ATCC 47054 / DSM 6125 / CFBP 8728 / NCIMB 11950 / KT2440), this protein is Methionine--tRNA ligase.